Consider the following 731-residue polypeptide: Cucumisin (731 aa).

The N-terminal stretch at 1–22 (MSSSLIFKLFFFSLFFSNRLAS) is a signal peptide. Positions 23 to 110 (RLDSDDDGKN…VFLNEMNELH (88 aa)) are cleaved as a propeptide — activation peptide. The 77-residue stretch at 34-110 (YIVYMGRKLE…VFLNEMNELH (77 aa)) folds into the Inhibitor I9 domain. The region spanning 114–584 (SWDFLGFPLT…SGHVNPLKAV (471 aa)) is the Peptidase S8 domain. Catalysis depends on aspartate 140, which acts as the Charge relay system. Cysteine 166 and cysteine 174 form a disulfide bridge. The Charge relay system role is filled by histidine 204. Intrachain disulfides connect cysteine 245–cysteine 250 and cysteine 380–cysteine 397. Asparagine 466 carries N-linked (GlcNAc...) asparagine glycosylation. Serine 525 (charge relay system) is an active-site residue. The propeptide occupies 616–731 (GDYSACTSGN…RSPITITSLV (116 aa)). Asparagine 652 carries N-linked (GlcNAc...) asparagine glycosylation.

The protein belongs to the peptidase S8 family. In terms of assembly, monomer and dimer. In terms of processing, the C-terminal propeptide is autocleaved. In terms of tissue distribution, specifically expressed in fruits. Expressed in sarcocarp (at protein level).

The protein resides in the secreted. The enzyme catalyses Hydrolysis of proteins with broad specificity.. The sequence is that of Cucumisin from Cucumis melo (Muskmelon).